The primary structure comprises 1060 residues: Carbamoyl phosphate synthase large chain (1060 aa).

Residues 1 to 400 (MPRDESINKV…SLNKAIRSLD (400 aa)) are carboxyphosphate synthetic domain. The ATP site is built by R127, R167, G173, G174, Q206, V208, E213, G240, I241, H242, Q283, and E297. One can recognise an ATP-grasp 1 domain in the interval 131 to 326 (DSFMKKLNEP…IAKIAAKIAV (196 aa)). Mg(2+)-binding residues include Q283, E297, and N299. The Mn(2+) site is built by Q283, E297, and N299. Positions 401-539 (IGADGFTETP…YGCYDLEDEV (139 aa)) are oligomerization domain. A carbamoyl phosphate synthetic domain region spans residues 540 to 926 (EVSDRRKVLI…YKSQLSASMD (387 aa)). In terms of domain architecture, ATP-grasp 2 spans 664–858 (TEVLNKLGIP…LAKMAARLMM (195 aa)). ATP contacts are provided by R700, K739, L741, E746, G771, V772, H773, S774, Q814, and E829. Mg(2+) is bound by residues Q814, E829, and N831. Positions 814, 829, and 831 each coordinate Mn(2+). Positions 925–1060 (MDLLNEGKVF…VKSLDEYHGM (136 aa)) constitute an MGS-like domain. The segment at 927–1060 (LLNEGKVFIS…VKSLDEYHGM (134 aa)) is allosteric domain.

Belongs to the CarB family. As to quaternary structure, composed of two chains; the small (or glutamine) chain promotes the hydrolysis of glutamine to ammonia, which is used by the large (or ammonia) chain to synthesize carbamoyl phosphate. Tetramer of heterodimers (alpha,beta)4. Requires Mg(2+) as cofactor. Mn(2+) serves as cofactor.

The enzyme catalyses hydrogencarbonate + L-glutamine + 2 ATP + H2O = carbamoyl phosphate + L-glutamate + 2 ADP + phosphate + 2 H(+). It catalyses the reaction hydrogencarbonate + NH4(+) + 2 ATP = carbamoyl phosphate + 2 ADP + phosphate + 2 H(+). Its pathway is amino-acid biosynthesis; L-arginine biosynthesis; carbamoyl phosphate from bicarbonate: step 1/1. It participates in pyrimidine metabolism; UMP biosynthesis via de novo pathway; (S)-dihydroorotate from bicarbonate: step 1/3. Its function is as follows. Large subunit of the glutamine-dependent carbamoyl phosphate synthetase (CPSase). CPSase catalyzes the formation of carbamoyl phosphate from the ammonia moiety of glutamine, carbonate, and phosphate donated by ATP, constituting the first step of 2 biosynthetic pathways, one leading to arginine and/or urea and the other to pyrimidine nucleotides. The large subunit (synthetase) binds the substrates ammonia (free or transferred from glutamine from the small subunit), hydrogencarbonate and ATP and carries out an ATP-coupled ligase reaction, activating hydrogencarbonate by forming carboxy phosphate which reacts with ammonia to form carbamoyl phosphate. This chain is Carbamoyl phosphate synthase large chain, found in Methanothermobacter thermautotrophicus (strain ATCC 29096 / DSM 1053 / JCM 10044 / NBRC 100330 / Delta H) (Methanobacterium thermoautotrophicum).